We begin with the raw amino-acid sequence, 297 residues long: T-cell leukemia homeobox protein 3 (297 aa).

The tract at residues 1 to 68 is disordered; the sequence is MEPAAGAQGP…LGGPRGGAPY (68 aa). Pro residues predominate over residues 32–52; that stretch reads APPPPPPPPPPPPPPPPPPRG. Positions 172-231 form a DNA-binding region, homeobox; it reads RKKPRTSFSRVQICELEKRFHRQKYLASAERAALAKSLKMTDAQVKTWFQNRRTKWRRQT.

In terms of tissue distribution, expression is restricted to neurons in the peripheral and central nervous system.

The protein localises to the nucleus. Seems to be involved in the development of cranial sensory innervation from peripheral ganglia. The sequence is that of T-cell leukemia homeobox protein 3 (TLX3) from Gallus gallus (Chicken).